Consider the following 1338-residue polypeptide: MVSYWDTGVLLCALLSCLLLTGSSSGSKLKDPELSLKGTQHIMQAGQTLHLQCRGEAAHKWSLPEMVSKESERLSITKSACGRNGKQFCSTLTLNTAQANHTGFYSCKYLAVPTSKKKETESAIYIFISDTGRPFVEMYSEIPEIIHMTEGRELVIPCRVTSPNITVTLKKFPLDTLIPDGKRIIWDSRKGFIISNATYKEIGLLTCEATVNGHLYKTNYLTHRQTNTIIDVQISTPRPVKLLRGHTLVLNCTATTPLNTRVQMTWSYPDEKNKRASVRRRIDQSNSHANIFYSVLTIDKMQNKDKGLYTCRVRSGPSFKSVNTSVHIYDKAFITVKHRKQQVLETVAGKRSYRLSMKVKAFPSPEVVWLKDGLPATEKSARYLTRGYSLIIKDVTEEDAGNYTILLSIKQSNVFKNLTATLIVNVKPQIYEKAVSSFPDPALYPLGSRQILTCTAYGIPQPTIKWFWHPCNHNHSEARCDFCSNNEESFILDADSNMGNRIESITQRMAIIEGKNKMASTLVVADSRISGIYICIASNKVGTVGRNISFYITDVPNGFHVNLEKMPTEGEDLKLSCTVNKFLYRDVTWILLRTVNNRTMHYSISKQKMAITKEHSITLNLTIMNVSLQDSGTYACRARNVYTGEEILQKKEITIRDQEAPYLLRNLSDHTVAISSSTTLDCHANGVPEPQITWFKNNHKIQQEPGIILGPGSSTLFIERVTEEDEGVYHCKATNQKGSVESSAYLTVQGTSDKSNLELITLTCTCVAATLFWLLLTLFIRKMKRSSSEIKTDYLSIIMDPDEVPLDEQCERLPYDASKWEFARERLKLGKSLGRGAFGKVVQASAFGIKKSPTCRTVAVKMLKEGATASEYKALMTELKILTHIGHHLNVVNLLGACTKQGGPLMVIVEYCKYGNLSNYLKSKRDLFFLNKDAALHMEPKKEKMEPGLEQGKKPRLDSVTSSESFASSGFQEDKSLSDVEEEEDSDGFYKEPITMEDLISYSFQVARGMEFLSSRKCIHRDLAARNILLSENNVVKICDFGLARDIYKNPDYVRKGDTRLPLKWMAPESIFDKIYSTKSDVWSYGVLLWEIFSLGGSPYPGVQMDEDFCSRLREGMRMRAPEYSTPEIYQIMLDCWHRDPKERPRFAELVEKLGDLLQANVQQDGKDYIPINAILTGNSGFTYSTPAFSEDFFKESISAPKFNSGSSDDVRYVNAFKFMSLERIKTFEELLPNATSMFDDYQGDSSTLLASPMLKRFTWTDSKPKASLKIDLRVTSKSKESGLSDVSRPSFCHSSCGHVSEGKRRFTYDHAELERKIACCSPPPDYNSVVLYSTPPI.

An N-terminal signal peptide occupies residues 1–26 (MVSYWDTGVLLCALLSCLLLTGSSSG). Over 27–758 (SKLKDPELSL…QGTSDKSNLE (732 aa)) the chain is Extracellular. Ig-like C2-type domains are found at residues 32 to 123 (PELS…TESA), 151 to 214 (GREL…VNGH), 230 to 327 (IDVQ…TSVH), 335 to 421 (TVKH…LTAT), 428 to 553 (PQIY…FYIT), 556 to 654 (PNGF…KEIT), and 661 to 747 (PYLL…AYLT). Intrachain disulfides connect Cys-53–Cys-107 and Cys-158–Cys-207. N-linked (GlcNAc...) asparagine glycosylation is found at Asn-100, Asn-164, Asn-196, and Asn-251. A disulfide bridge connects residues Cys-252 and Cys-311. Asn-323, Asn-402, Asn-417, Asn-474, Asn-547, Asn-597, Asn-620, Asn-625, and Asn-666 each carry an N-linked (GlcNAc...) asparagine glycan. Cys-454 and Cys-535 are oxidised to a cystine. Residues Cys-577 and Cys-636 are joined by a disulfide bond. A disulfide bridge links Cys-682 with Cys-731. Residues 759 to 780 (LITLTCTCVAATLFWLLLTLFI) form a helical membrane-spanning segment. Residues 781–1338 (RKMKRSSSEI…SVVLYSTPPI (558 aa)) are Cytoplasmic-facing. Residues 827-1158 (LKLGKSLGRG…ELVEKLGDLL (332 aa)) enclose the Protein kinase domain. Residues 833-841 (LGRGAFGKV) and Lys-861 contribute to the ATP site. Tyr-914 is modified (phosphotyrosine; by autocatalysis). Positions 940–957 (PKKEKMEPGLEQGKKPRL) are enriched in basic and acidic residues. The interval 940–982 (PKKEKMEPGLEQGKKPRLDSVTSSESFASSGFQEDKSLSDVEE) is disordered. Polar residues predominate over residues 959-971 (SVTSSESFASSGF). Asp-1022 functions as the Proton acceptor in the catalytic mechanism. Phosphotyrosine; by autocatalysis occurs at positions 1053, 1169, 1213, 1242, 1309, 1327, and 1333.

The protein belongs to the protein kinase superfamily. Tyr protein kinase family. CSF-1/PDGF receptor subfamily. Interacts with VEGFA, VEGFB and PGF. Monomer in the absence of bound VEGFA, VEGFB or PGF. Homodimer in the presence of bound VEGFA, VEGFB and PGF. Can also form a heterodimer with KDR. Interacts (when tyrosine phosphorylated) with CBL, CRK, GRB2, NCK1, PIK3R1, PLCG, PSEN1 and PTPN11. Probably also interacts with PTPRB. Interacts with RACK1. Identified in a complex with CBL and CD2AP. Post-translationally, N-glycosylated. In terms of processing, ubiquitinated after VEGFA-mediated autophosphorylation, leading to proteolytic degradation. Autophosphorylated on tyrosine residues upon ligand binding. Autophosphorylation occurs in trans, i.e. one subunit of the dimeric receptor phosphorylates tyrosine residues on the other subunit. Phosphorylation at Tyr-1169 is important for interaction with PLCG. Phosphorylation at Tyr-1213 is important for interaction with PIK3R1, PTPN11, GRB2, and PLCG. Phosphorylation at Tyr-1333 is important for endocytosis and for interaction with CBL, NCK1 and CRK. Is probably dephosphorylated by PTPRB. Detected in normal lung, but also in placenta, liver, kidney, heart and brain tissues. Specifically expressed in most of the vascular endothelial cells, and also expressed in peripheral blood monocytes. Isoform 2 is strongly expressed in placenta. Isoform 3 is expressed in corneal epithelial cells (at protein level). Isoform 3 is expressed in vascular smooth muscle cells (VSMC).

The protein resides in the cell membrane. It is found in the endosome. Its subcellular location is the secreted. It localises to the cytoplasm. The catalysed reaction is L-tyrosyl-[protein] + ATP = O-phospho-L-tyrosyl-[protein] + ADP + H(+). With respect to regulation, present in an inactive conformation in the absence of bound ligand. Binding of VEGFA, VEGFB or PGF leads to dimerization and activation by autophosphorylation on tyrosine residues. In terms of biological role, tyrosine-protein kinase that acts as a cell-surface receptor for VEGFA, VEGFB and PGF, and plays an essential role in the development of embryonic vasculature, the regulation of angiogenesis, cell survival, cell migration, macrophage function, chemotaxis, and cancer cell invasion. Acts as a positive regulator of postnatal retinal hyaloid vessel regression. May play an essential role as a negative regulator of embryonic angiogenesis by inhibiting excessive proliferation of endothelial cells. Can promote endothelial cell proliferation, survival and angiogenesis in adulthood. Its function in promoting cell proliferation seems to be cell-type specific. Promotes PGF-mediated proliferation of endothelial cells, proliferation of some types of cancer cells, but does not promote proliferation of normal fibroblasts (in vitro). Has very high affinity for VEGFA and relatively low protein kinase activity; may function as a negative regulator of VEGFA signaling by limiting the amount of free VEGFA and preventing its binding to KDR. Modulates KDR signaling by forming heterodimers with KDR. Ligand binding leads to the activation of several signaling cascades. Activation of PLCG leads to the production of the cellular signaling molecules diacylglycerol and inositol 1,4,5-trisphosphate and the activation of protein kinase C. Mediates phosphorylation of PIK3R1, the regulatory subunit of phosphatidylinositol 3-kinase, leading to activation of phosphatidylinositol kinase and the downstream signaling pathway. Mediates activation of MAPK1/ERK2, MAPK3/ERK1 and the MAP kinase signaling pathway, as well as of the AKT1 signaling pathway. Phosphorylates SRC and YES1, and may also phosphorylate CBL. Promotes phosphorylation of AKT1 at 'Ser-473'. Promotes phosphorylation of PTK2/FAK1. Phosphorylates PLCG. Its function is as follows. May function as decoy receptor for VEGFA. Functionally, has a truncated kinase domain; it increases phosphorylation of SRC at 'Tyr-418' by unknown means and promotes tumor cell invasion. The protein is Vascular endothelial growth factor receptor 1 (FLT1) of Homo sapiens (Human).